Reading from the N-terminus, the 964-residue chain is Chromatin assembly factor 1 subunit A (964 aa).

Residues 1–49 are binds to PCNA; the sequence is MLEEPECGAPGARGEAAAMDCKDRPAFPVKKLIQARLPFKRLNLVPKEK. The binds to CBX1 chromo shadow domain stretch occupies residues 1-316; that stretch reads MLEEPECGAP…LHTGPSPFPA (316 aa). 3 positions are modified to phosphoserine: Ser-126, Ser-141, and Ser-144. Residues 146 to 232 form a disordered region; that stretch reads AQKNINGVPD…KDRDGWSEAG (87 aa). Residues 156 to 172 show a composition bias toward basic and acidic residues; that stretch reads KAGDDRGLPKARQKDEL. Lys-185 is covalently cross-linked (Glycyl lysine isopeptide (Lys-Gly) (interchain with G-Cter in SUMO1); alternate). Lys-185 participates in a covalent cross-link: Glycyl lysine isopeptide (Lys-Gly) (interchain with G-Cter in SUMO2); alternate. Positions 236–249 match the PxVxL motif motif; that stretch reads FKGKMPVVVLQDIL. Disordered regions lie at residues 253 to 437 and 601 to 641; these read PPAR…REEE and DSDE…VPHG. Low complexity predominate over residues 284–298; the sequence is LSHSSLSSSSPTSSP. Ser-312 carries the phosphoserine modification. The stretch at 329-453 forms a coiled coil; sequence RGSAEKNKMK…KAEITRFFQK (125 aa). Residues 331-437 are compositionally biased toward basic and acidic residues; the sequence is SAEKNKMKLQ…EEEKRLREEE (107 aa). Composition is skewed to acidic residues over residues 601-612 and 620-635; these read DSDEEWEEEEPG and GDDD…EDDG. Residues 644–680 form a necessary for homodimerization and competence for chromatin assembly region; the sequence is SEDEGVTEECADPENHKVRQKLKAKEWDEFLAKGKRF. Residues 662-964 form a binds to p60 region; it reads RQKLKAKEWD…FVSPSSLRLS (303 aa). Position 723 is a phosphothreonine (Thr-723). The segment at 769–799 is disordered; it reads RDAGSPEDSAASPPSPGPARPQTPTASEDVA. Residues 770–780 are compositionally biased toward low complexity; sequence DAGSPEDSAAS. Phosphoserine occurs at positions 773, 783, 811, 876, and 881. The interval 859-878 is disordered; sequence EDSGSVPAPGPGQGMPVSLK. 2 disordered regions span residues 897–920 and 933–964; these read DGQV…DDEG and IQAP…LRLS. A compositionally biased stretch (acidic residues) spans 904–920; that stretch reads DLDDFQADTEEEDDDEG. The span at 949 to 964 shows a compositional bias: polar residues; that stretch reads MDTSESFVSPSSLRLS. Position 959 is a phosphoserine (Ser-959).

Belongs to the CHAF1A family. Homodimer. Part of the CAF-1 complex that contains RBBP4, CHAF1B and CHAF1A. CHAF1A binds directly to CHAF1B. Only minor amounts of RBBP4 are complexed with CHAF1A and CHAF1B in G1 phase. Interacts with PCNA; the interaction is direct. Interacts (via the PxVxL motif) with CBX5; the interaction is direct. Interacts with MBD1. Interacts with histones H3.1, H3.2 and H3.1t.

Its subcellular location is the nucleus. In terms of biological role, acts as a component of the histone chaperone complex chromatin assembly factor 1 (CAF-1), which assembles histone octamers onto DNA during replication and repair. CAF-1 performs the first step of the nucleosome assembly process, bringing newly synthesized histones H3 and H4 to replicating DNA; histones H2A/H2B can bind to this chromatin precursor subsequent to DNA replication to complete the histone octamer. It may play a role in heterochromatin maintenance in proliferating cells by bringing newly synthesized cbx proteins to heterochromatic DNA replication foci. The sequence is that of Chromatin assembly factor 1 subunit A (CHAF1A) from Bos taurus (Bovine).